The primary structure comprises 1242 residues: Membrane-associated phosphatidylinositol transfer protein 1 (1242 aa).

T59, T282, and T287 each carry phosphothreonine. Positions 259–330 (CNTGSEGPEA…HGGGVSPQSL (72 aa)) are disordered. Over residues 272-282 (GKPSTETQPGT) the composition is skewed to polar residues. Over residues 299–319 (ASPDASFGKQWSSSSRSSYSS) the composition is skewed to low complexity. S300, S304, S319, S326, S329, S342, S345, S346, and S373 each carry phosphoserine. S382 carries the post-translational modification Phosphoserine; by CDK1. The segment covering 581–593 (AGTGSRGSSRRGS) has biased composition (low complexity). The tract at residues 581–678 (AGTGSRGSSR…PASSEAPDGP (98 aa)) is disordered. Phosphoserine is present on residues S593, S600, and S621. Polar residues predominate over residues 643–656 (GSQNSLQVAPTVTS). The DDHD domain maps to 684 to 878 (LDFKVSGFFL…VAFILRQVIE (195 aa)). Residue S894 is modified to Phosphoserine. A disordered region spans residues 1207–1242 (RSRGPSQVDLEGPGTPPTTLARGKTRSISLKLDSEE). Omega-N-methylarginine is present on R1209. S1235 carries the post-translational modification Phosphoserine.

This sequence belongs to the PtdIns transfer protein family. PI transfer class IIA subfamily. As to quaternary structure, interacts with PIK4CA and VAPB. Interacts with PTK2B via its C-terminus. Interacts with RHOA. Has higher affinity for the inactive, GDP-bound form of RHOA. The CDK1-phosphorylated form interacts with PLK1. Phosphorylated on multiple sites by CDK1 at the onset of mitosis. Phosphorylation facilitates dissociation from the Golgi complex and is required for interaction with PLK1. In terms of processing, phosphorylated on threonine residues upon treatment with oleic acid. Post-translationally, phosphorylated on tyrosine residues by PTK2B.

It is found in the cytoplasm. Its subcellular location is the golgi apparatus. The protein localises to the golgi stack membrane. It localises to the endoplasmic reticulum membrane. The protein resides in the lipid droplet. It is found in the cleavage furrow. Its subcellular location is the midbody. The enzyme catalyses a 1,2-diacyl-sn-glycero-3-phospho-(1D-myo-inositol)(in) = a 1,2-diacyl-sn-glycero-3-phospho-(1D-myo-inositol)(out). In terms of biological role, catalyzes the transfer of phosphatidylinositol (PI) between membranes. Binds PI, phosphatidylcholine (PC) and phosphatidic acid (PA) with the binding affinity order of PI &gt; PA &gt; PC. Regulates RHOA activity, and plays a role in cytoskeleton remodeling. Necessary for normal completion of cytokinesis. Plays a role in maintaining normal diacylglycerol levels in the Golgi apparatus. Necessary for maintaining the normal structure of the endoplasmic reticulum and the Golgi apparatus. Required for protein export from the endoplasmic reticulum and the Golgi. Binds calcium ions. This is Membrane-associated phosphatidylinositol transfer protein 1 (Pitpnm1) from Rattus norvegicus (Rat).